Consider the following 73-residue polypeptide: Conotoxin Bt11.1 (73 aa).

The signal sequence occupies residues 1–20 (MKLCVAFLLVLVILPSVIGG). Positions 21 to 35 (KPSERTLSGATRRGD) are excised as a propeptide. 4 disulfide bridges follow: cysteine 39–cysteine 53, cysteine 46–cysteine 58, cysteine 52–cysteine 63, and cysteine 57–cysteine 70.

It belongs to the conotoxin I1 superfamily. As to expression, expressed by the venom duct.

It localises to the secreted. This chain is Conotoxin Bt11.1, found in Conus betulinus (Beech cone).